The primary structure comprises 340 residues: Anthranilate phosphoribosyltransferase (340 aa).

5-phospho-alpha-D-ribose 1-diphosphate is bound by residues glycine 79, 82–83 (GD), serine 87, 89–92 (NIST), 107–115 (KHGNRSVSS), and serine 119. Glycine 79 lines the anthranilate pocket. A Mg(2+)-binding site is contributed by serine 91. Anthranilate is bound at residue asparagine 110. Arginine 165 contacts anthranilate. Residues aspartate 224 and glutamate 225 each contribute to the Mg(2+) site.

The protein belongs to the anthranilate phosphoribosyltransferase family. In terms of assembly, homodimer. It depends on Mg(2+) as a cofactor.

It carries out the reaction N-(5-phospho-beta-D-ribosyl)anthranilate + diphosphate = 5-phospho-alpha-D-ribose 1-diphosphate + anthranilate. Its pathway is amino-acid biosynthesis; L-tryptophan biosynthesis; L-tryptophan from chorismate: step 2/5. Catalyzes the transfer of the phosphoribosyl group of 5-phosphorylribose-1-pyrophosphate (PRPP) to anthranilate to yield N-(5'-phosphoribosyl)-anthranilate (PRA). The protein is Anthranilate phosphoribosyltransferase of Oceanobacillus iheyensis (strain DSM 14371 / CIP 107618 / JCM 11309 / KCTC 3954 / HTE831).